The following is a 98-amino-acid chain: Putative zinc finger protein ORF98b (98 aa).

The C2H2-type zinc finger occupies G54–H77.

This is Putative zinc finger protein ORF98b from Acidianus convivator (ATV).